The primary structure comprises 424 residues: Enolase (424 aa).

Q162 serves as a coordination point for (2R)-2-phosphoglycerate. Residue E204 is the Proton donor of the active site. The Mg(2+) site is built by D241, E284, and D311. Residues K336, R365, S366, and K387 each coordinate (2R)-2-phosphoglycerate. K336 serves as the catalytic Proton acceptor.

Belongs to the enolase family. It depends on Mg(2+) as a cofactor.

Its subcellular location is the cytoplasm. It localises to the secreted. The protein localises to the cell surface. It carries out the reaction (2R)-2-phosphoglycerate = phosphoenolpyruvate + H2O. Its pathway is carbohydrate degradation; glycolysis; pyruvate from D-glyceraldehyde 3-phosphate: step 4/5. In terms of biological role, catalyzes the reversible conversion of 2-phosphoglycerate (2-PG) into phosphoenolpyruvate (PEP). It is essential for the degradation of carbohydrates via glycolysis. The sequence is that of Enolase from Parvibaculum lavamentivorans (strain DS-1 / DSM 13023 / NCIMB 13966).